The following is a 38-amino-acid chain: U-theraphotoxin-Aju1a (38 aa).

Cystine bridges form between Cys-3-Cys-24, Cys-7-Cys-30, and Cys-16-Cys-35.

In terms of tissue distribution, expressed by the venom gland.

It localises to the secreted. Has strong antifungal activity against C.albicans MDM8, C.krusei IOC 4559 (MIC=2.5-5 uM), C.glabrata IOC 45658 (MIC=2.5-5 uM), C.albicans IOC 45588 (MIC=2.5-5 uM), C.parapsilosis IOC 456416 (MIC=2.5-5 uM), C.tropicalis IOC 45608 (MIC=2.5-5 uM), C.guilliermondii IOC 455716 (MIC=2.5-5 uM) and A.niger (MIC=5-10 uM). Lacks antifungal activity against B.bassiana. Has no antibacterial effect against Gram-positive bacteria M.luteus, S.epidermidis, S.aureus or against Gram-negative bacteria E.coli and P.aeruginosa. Has no hemolytic activity against human erythrocytes. Probable ion channel inhibitor. The sequence is that of U-theraphotoxin-Aju1a from Avicularia juruensis (Yellow-banded pinktoe).